The sequence spans 234 residues: Ribonuclease 3 (234 aa).

The RNase III domain maps to 6–134 (RKSLEERVGH…IVGALYLDGG (129 aa)). Glu-47 lines the Mg(2+) pocket. The active site involves Asp-51. Mg(2+) contacts are provided by Ser-120 and Glu-123. Glu-123 is a catalytic residue. Residues 162–231 (DYKTRLQELV…AKNALEMKYK (70 aa)) enclose the DRBM domain.

Belongs to the ribonuclease III family. As to quaternary structure, homodimer. Mg(2+) serves as cofactor.

The protein resides in the cytoplasm. It carries out the reaction Endonucleolytic cleavage to 5'-phosphomonoester.. In terms of biological role, digests double-stranded RNA. Involved in the processing of primary rRNA transcript to yield the immediate precursors to the large and small rRNAs (23S and 16S). Processes some mRNAs, and tRNAs when they are encoded in the rRNA operon. Processes pre-crRNA and tracrRNA of type II CRISPR loci if present in the organism. This chain is Ribonuclease 3, found in Bdellovibrio bacteriovorus (strain ATCC 15356 / DSM 50701 / NCIMB 9529 / HD100).